Reading from the N-terminus, the 634-residue chain is Probable potassium transport system protein Kup 2 (634 aa).

Transmembrane regions (helical) follow at residues 15 to 35, 55 to 75, 101 to 121, 142 to 162, 173 to 193, 208 to 228, 252 to 272, 303 to 323, 351 to 371, 381 to 401, 408 to 428, and 435 to 455; these read LTLG…LYAF, VLSL…VIFL, WVAV…DAII, GMSQ…LFMF, LFGP…LWHI, AVTF…AVFL, WLSF…ALAL, LVIL…TGAY, IYMP…VLGF, YGIA…LIAW, PVWT…FFGA, and EGGW…FTWL.

This sequence belongs to the HAK/KUP transporter (TC 2.A.72) family.

The protein localises to the cell inner membrane. It catalyses the reaction K(+)(in) + H(+)(in) = K(+)(out) + H(+)(out). Transport of potassium into the cell. Likely operates as a K(+):H(+) symporter. This Novosphingobium aromaticivorans (strain ATCC 700278 / DSM 12444 / CCUG 56034 / CIP 105152 / NBRC 16084 / F199) protein is Probable potassium transport system protein Kup 2.